The chain runs to 280 residues: Maltodextrin transport system permease protein MalD (280 aa).

The next 6 membrane-spanning stretches (helical) occupy residues 15-35, 77-97, 110-130, 142-162, 200-220, and 244-264; these read LTYLYLIGLSIVIIYPLLITI, LIIALITMAVQTSIIVLAGYA, LVFFLIIQMVPTMAALTAFFV, WFLIFLYVGGGIPMNAWLMKG, VQALWAFMGPFGDYILSSFLL, and IAYFSAGAILIALPICILFFF. Residues 73–265 enclose the ABC transmembrane type-1 domain; it reads YLNTLIIALI…LPICILFFFL (193 aa).

Belongs to the binding-protein-dependent transport system permease family. MalFG subfamily.

Its subcellular location is the cell membrane. In terms of biological role, part of the binding-protein-dependent transport system for maltodextrin; probably responsible for the translocation of the substrate across the membrane. The protein is Maltodextrin transport system permease protein MalD (malD) of Streptococcus pneumoniae (strain ATCC BAA-255 / R6).